The sequence spans 151 residues: UPF0208 membrane protein YfbV (151 aa).

The next 2 helical transmembrane spans lie at 46 to 65 (YAIR…QIAL) and 69 to 91 (LGPA…WWLG).

Belongs to the UPF0208 family.

The protein resides in the cell inner membrane. The polypeptide is UPF0208 membrane protein YfbV (Shigella boydii serotype 18 (strain CDC 3083-94 / BS512)).